The sequence spans 417 residues: Serine hydroxymethyltransferase (417 aa).

(6S)-5,6,7,8-tetrahydrofolate is bound by residues Leu-112 and 116 to 118; that span reads GHL. Position 221 is an N6-(pyridoxal phosphate)lysine (Lys-221). Glu-247 is a binding site for (6S)-5,6,7,8-tetrahydrofolate.

It belongs to the SHMT family. In terms of assembly, homodimer. Pyridoxal 5'-phosphate is required as a cofactor.

The protein localises to the cytoplasm. The enzyme catalyses (6R)-5,10-methylene-5,6,7,8-tetrahydrofolate + glycine + H2O = (6S)-5,6,7,8-tetrahydrofolate + L-serine. It functions in the pathway one-carbon metabolism; tetrahydrofolate interconversion. The protein operates within amino-acid biosynthesis; glycine biosynthesis; glycine from L-serine: step 1/1. Its function is as follows. Catalyzes the reversible interconversion of serine and glycine with tetrahydrofolate (THF) serving as the one-carbon carrier. This reaction serves as the major source of one-carbon groups required for the biosynthesis of purines, thymidylate, methionine, and other important biomolecules. Also exhibits THF-independent aldolase activity toward beta-hydroxyamino acids, producing glycine and aldehydes, via a retro-aldol mechanism. The protein is Serine hydroxymethyltransferase of Borrelia recurrentis (strain A1).